Reading from the N-terminus, the 854-residue chain is Iron and copper transporter IacT (854 aa).

The TonB box motif lies at 187–194 (IELIVTAQ). The 117-residue stretch at 199 to 315 (DAQDVPLSLT…PAGVVNVISR (117 aa)) folds into the TBDR plug domain. The region spanning 320 to 854 (QPEMRISALY…TYGVRVSASF (535 aa)) is the TBDR beta-barrel domain. The short motif at 839–854 (GFGDPVTYGVRVSASF) is the TonB C-terminal box element.

It belongs to the TonB-dependent receptor family.

Its subcellular location is the cell outer membrane. Its function is as follows. Involved in the TonB-dependent uptake of copper and iron under conditions in which the concentration of copper exceeds that of the iron. In Nostoc sp. (strain PCC 7120 / SAG 25.82 / UTEX 2576), this protein is Iron and copper transporter IacT.